The chain runs to 215 residues: Urease accessory protein UreG (215 aa).

Residue Gly24 to Thr31 participates in GTP binding.

This sequence belongs to the SIMIBI class G3E GTPase family. UreG subfamily. Homodimer. UreD, UreF and UreG form a complex that acts as a GTP-hydrolysis-dependent molecular chaperone, activating the urease apoprotein by helping to assemble the nickel containing metallocenter of UreC. The UreE protein probably delivers the nickel.

It localises to the cytoplasm. Its function is as follows. Facilitates the functional incorporation of the urease nickel metallocenter. This process requires GTP hydrolysis, probably effectuated by UreG. The polypeptide is Urease accessory protein UreG (Burkholderia ambifaria (strain MC40-6)).